The chain runs to 204 residues: Protein DESIGUAL 4 (204 aa).

Transmembrane regions (helical) follow at residues 13-33 (IITVIIVCIVLTVGLDIVAGF), 60-80 (FVLGIIAVSCLATAHVSANVI), 107-127 (CLFLIWVVGIFGALILANGIW), and 143-163 (VFSIGGKVCFLHAIVSGIYYI). Positions 177–204 (KPNKTKPSELKPIPTEPNEAEPNSTPNP) are disordered. An N-linked (GlcNAc...) asparagine glycan is attached at Asn-179.

It belongs to the DESIGUAL family. In terms of tissue distribution, only expressed in inflorescences.

The protein localises to the endoplasmic reticulum membrane. This Arabidopsis thaliana (Mouse-ear cress) protein is Protein DESIGUAL 4.